The primary structure comprises 179 residues: Large ribosomal subunit protein uL6 (179 aa).

The protein belongs to the universal ribosomal protein uL6 family. As to quaternary structure, part of the 50S ribosomal subunit.

In terms of biological role, this protein binds to the 23S rRNA, and is important in its secondary structure. It is located near the subunit interface in the base of the L7/L12 stalk, and near the tRNA binding site of the peptidyltransferase center. The sequence is that of Large ribosomal subunit protein uL6 from Leptospira biflexa serovar Patoc (strain Patoc 1 / ATCC 23582 / Paris).